A 289-amino-acid chain; its full sequence is Cbb3-type cytochrome c oxidase subunit FixP (289 aa).

Topologically, residues Met-1–Arg-33 are cytoplasmic. A helical transmembrane segment spans residues Trp-34–Trp-56. Over Pro-57–Glu-289 the chain is Periplasmic. Cytochrome c domains lie at Phe-110 to Thr-198 and His-205 to Gly-286. 8 residues coordinate heme c: Cys-123, Cys-126, His-127, Met-175, Cys-218, Cys-221, His-222, and Met-263.

Belongs to the CcoP / FixP family. As to quaternary structure, component of the cbb3-type cytochrome c oxidase at least composed of FixN, FixO, FixQ and FixP. Requires heme c as cofactor.

The protein localises to the cell inner membrane. The protein operates within energy metabolism; oxidative phosphorylation. Functionally, C-type cytochrome. Part of the cbb3-type cytochrome c oxidase complex. FixP subunit is required for transferring electrons from donor cytochrome c via its heme groups to FixO subunit. From there, electrons are shuttled to the catalytic binuclear center of FixN subunit where oxygen reduction takes place. The complex also functions as a proton pump. In Sinorhizobium medicae (strain WSM419) (Ensifer medicae), this protein is Cbb3-type cytochrome c oxidase subunit FixP.